Reading from the N-terminus, the 237-residue chain is N-(5'-phosphoribosyl)anthranilate isomerase (237 aa).

This sequence belongs to the TrpF family.

It catalyses the reaction N-(5-phospho-beta-D-ribosyl)anthranilate = 1-(2-carboxyphenylamino)-1-deoxy-D-ribulose 5-phosphate. The protein operates within amino-acid biosynthesis; L-tryptophan biosynthesis; L-tryptophan from chorismate: step 3/5. This Komagataella pastoris (Yeast) protein is N-(5'-phosphoribosyl)anthranilate isomerase (TRP1).